A 222-amino-acid polypeptide reads, in one-letter code: MTEMQPAILALLAITAALGLLVLAVVTTTAFVKVSVVLFLVRNALGTQTIPPNIVLYAAALILTMFVSAPVAEQTYDRITDPRLRYQSLDDWAEAAKAGSQPLLEHLKKFTNEEQRRFFLSSTEKVWPEEMRAGVTADDFAILVPSFLISELKRAFEIGFLLYLPFIVIDLIVTTILMAMGMSMVSPTIIAVPFKLFLFVAIDGWSRLMHGLVLSYTMPGAL.

Helical transmembrane passes span 6–26 (PAILALLAITAALGLLVLAVV), 52–72 (PNIVLYAAALILTMFVSAPVA), 158–178 (IGFLLYLPFIVIDLIVTTILM), and 182–202 (MSMVSPTIIAVPFKLFLFVAI).

Belongs to the FliP/MopC/SpaP family.

The protein resides in the cell membrane. Its function is as follows. Could be involved in the secretion of an unknown factor. In Sinorhizobium fredii (strain NBRC 101917 / NGR234), this protein is Probable translocation protein y4yL.